Reading from the N-terminus, the 380-residue chain is Protein-tyrosine sulfotransferase A (380 aa).

Residues 1–6 lie on the Cytoplasmic side of the membrane; sequence MRKNRE. The helical; Signal-anchor for type II membrane protein transmembrane segment at 7-27 threads the bilayer; the sequence is LLLVLFLVVFILFYFITARTA. The Lumenal portion of the chain corresponds to 28-380; it reads DDPYYSNHRE…PIVDNEVSKL (353 aa). A glycan (N-linked (GlcNAc...) asparagine) is linked at N66. 79 to 83 contacts 3'-phosphoadenylyl sulfate; sequence RSGTT. C97 and C157 are disulfide-bonded. E100 functions as the Proton donor/acceptor in the catalytic mechanism. Residues 102–106 are interaction with peptide substrate; sequence RVIPR. Residues R184, S192, and R196 each coordinate 3'-phosphoadenylyl sulfate. A disulfide bridge links C226 with C234. 3'-phosphoadenylyl sulfate is bound by residues Y239, 284–293, and K299; that span reads SSDQVVKPVN.

This sequence belongs to the protein sulfotransferase family.

It localises to the golgi apparatus membrane. The catalysed reaction is L-tyrosyl-[protein] + 3'-phosphoadenylyl sulfate = O-sulfo-L-tyrosine-[protein] + adenosine 3',5'-bisphosphate + H(+). Functionally, catalyzes the O-sulfation of tyrosine residues within acidic motifs of polypeptides, using 3'-phosphoadenylyl sulfate (PAPS) as cosubstrate. The protein is Protein-tyrosine sulfotransferase A (tpst-1) of Caenorhabditis elegans.